A 114-amino-acid polypeptide reads, in one-letter code: MGFRLLCCVAFCLLGAGPVDSGVTQTPKHLITATGQRVTLRCSPRSGDLSVYWYQQSLDQGLQFLIHYYNGEERAKGNILERFSAQQFPDLHSELNLSSLELGDSALYFCASSV.

The N-terminal stretch at 1 to 21 (MGFRLLCCVAFCLLGAGPVDS) is a signal peptide. One can recognise an Ig-like domain in the interval 22 to 114 (GVTQTPKHLI…SALYFCASSV (93 aa)). A disulfide bridge connects residues Cys42 and Cys110. Asn96 carries N-linked (GlcNAc...) asparagine glycosylation.

In terms of assembly, alpha-beta TR is a heterodimer composed of an alpha and beta chain; disulfide-linked. The alpha-beta TR is associated with the transmembrane signaling CD3 coreceptor proteins to form the TR-CD3 (TcR or TCR). The assembly of alpha-beta TR heterodimers with CD3 occurs in the endoplasmic reticulum where a single alpha-beta TR heterodimer associates with one CD3D-CD3E heterodimer, one CD3G-CD3E heterodimer and one CD247 homodimer forming a stable octameric structure. CD3D-CD3E and CD3G-CD3E heterodimers preferentially associate with TR alpha and TR beta chains, respectively. The association of the CD247 homodimer is the last step of TcR assembly in the endoplasmic reticulum and is required for transport to the cell surface.

It localises to the cell membrane. In terms of biological role, v region of the variable domain of T cell receptor (TR) beta chain that participates in the antigen recognition. Alpha-beta T cell receptors are antigen specific receptors which are essential to the immune response and are present on the cell surface of T lymphocytes. Recognize peptide-major histocompatibility (MH) (pMH) complexes that are displayed by antigen presenting cells (APC), a prerequisite for efficient T cell adaptive immunity against pathogens. Binding of alpha-beta TR to pMH complex initiates TR-CD3 clustering on the cell surface and intracellular activation of LCK that phosphorylates the ITAM motifs of CD3G, CD3D, CD3E and CD247 enabling the recruitment of ZAP70. In turn ZAP70 phosphorylates LAT, which recruits numerous signaling molecules to form the LAT signalosome. The LAT signalosome propagates signal branching to three major signaling pathways, the calcium, the mitogen-activated protein kinase (MAPK) kinase and the nuclear factor NF-kappa-B (NF-kB) pathways, leading to the mobilization of transcription factors that are critical for gene expression and essential for T cell growth and differentiation. The T cell repertoire is generated in the thymus, by V-(D)-J rearrangement. This repertoire is then shaped by intrathymic selection events to generate a peripheral T cell pool of self-MH restricted, non-autoaggressive T cells. Post-thymic interaction of alpha-beta TR with the pMH complexes shapes TR structural and functional avidity. The chain is T cell receptor beta variable 9 from Homo sapiens (Human).